A 353-amino-acid chain; its full sequence is MKNKILFIDRDGTLIDEPINTFQVDSINKLVFKKYVISSLRKLVELDYKLIMITNQDGLGTESFPLQDFSTAHLFMLSVFRSEGVIFDDILICPHFLDDDCVCRKPKIKMIEPWLDKIDLKKSYVIGDRDTDMQLSNNLKIKGIKYKEDICNWLHITKYIIKHNRYAEIIRRTKETKVSIKVWLDLEETSKIDTGVKFFDHMLEQLSVHSGICMNISVQGDLDIDDHHTIEDTGIVLGEALLQALGKKNGLSRFGFYLPMDESRSNCIMDISNRPYLNFKAKFNHKMAGDLSTNMVEHFFYSLCYSMKITLHLYAEGKNDHHCIESLFKVFGRTLRQAIKIEGNMLPTSKGIL.

The tract at residues 1–164 (MKNKILFIDR…HITKYIIKHN (164 aa)) is histidinol-phosphatase. Residue Asp-9 is the Nucleophile of the active site. Mg(2+)-binding residues include Asp-9 and Asp-11. Asp-11 functions as the Proton donor in the catalytic mechanism. Positions 93, 95, 101, and 103 each coordinate Zn(2+). Asp-128 is a binding site for Mg(2+). An imidazoleglycerol-phosphate dehydratase region spans residues 165–353 (RYAEIIRRTK…NMLPTSKGIL (189 aa)).

It in the N-terminal section; belongs to the histidinol-phosphatase family. In the C-terminal section; belongs to the imidazoleglycerol-phosphate dehydratase family. It depends on Mg(2+) as a cofactor. The cofactor is Zn(2+).

It localises to the cytoplasm. The catalysed reaction is D-erythro-1-(imidazol-4-yl)glycerol 3-phosphate = 3-(imidazol-4-yl)-2-oxopropyl phosphate + H2O. It carries out the reaction L-histidinol phosphate + H2O = L-histidinol + phosphate. Its pathway is amino-acid biosynthesis; L-histidine biosynthesis; L-histidine from 5-phospho-alpha-D-ribose 1-diphosphate: step 6/9. It participates in amino-acid biosynthesis; L-histidine biosynthesis; L-histidine from 5-phospho-alpha-D-ribose 1-diphosphate: step 8/9. This chain is Histidine biosynthesis bifunctional protein HisB, found in Buchnera aphidicola subsp. Acyrthosiphon pisum (strain Tuc7).